The sequence spans 119 residues: Protein phosphatase EYA4 (119 aa).

It belongs to the HAD-like hydrolase superfamily. EYA family. Requires Mg(2+) as cofactor.

It localises to the cytoplasm. The protein resides in the nucleus. The enzyme catalyses O-phospho-L-tyrosyl-[protein] + H2O = L-tyrosyl-[protein] + phosphate. Its function is as follows. Tyrosine phosphatase that specifically dephosphorylates 'Tyr-142' of histone H2AX (H2AXY142ph). 'Tyr-142' phosphorylation of histone H2AX plays a central role in DNA repair and acts as a mark that distinguishes between apoptotic and repair responses to genotoxic stress. Promotes efficient DNA repair by dephosphorylating H2AX, promoting the recruitment of DNA repair complexes containing MDC1. Its function as histone phosphatase probably explains its role in transcription regulation during organogenesis. May be involved in development of the eye. The sequence is that of Protein phosphatase EYA4 (EYA4) from Gallus gallus (Chicken).